The following is a 218-amino-acid chain: RHEVELVAQTTIFIFGGYETTSTSLSFIIYELATHPDVQQKLQEEIDATFPNKAPPTYDALVQMEYLDMVVNETLRMFPIAGRLERLCKKDVEIHGVSIPKGTTVMVPLFVLHNNPEFWPEPEEFRPERFSKKNKDGINPYVYLPFGTGPRNCVGMRFALMNIKLALVRILQNFSFIPCKETQIPLKLYTQGLTQPEQPVILKVAPRGLGPQAEPDFL.

Position 153 (C153) interacts with heme.

Belongs to the cytochrome P450 family. Requires heme as cofactor.

The protein localises to the endoplasmic reticulum membrane. It localises to the microsome membrane. The enzyme catalyses an organic molecule + reduced [NADPH--hemoprotein reductase] + O2 = an alcohol + oxidized [NADPH--hemoprotein reductase] + H2O + H(+). In terms of biological role, cytochromes P450 are a group of heme-thiolate monooxygenases. In liver microsomes, this enzyme is involved in an NADPH-dependent electron transport pathway. It oxidizes a variety of structurally unrelated compounds, including steroids, fatty acids, and xenobiotics. In Capra hircus aegagrus (Wild goat), this protein is Cytochrome P450 3A19 (CYP3A19).